A 467-amino-acid chain; its full sequence is Ribosomal RNA small subunit methyltransferase F (467 aa).

Residues 119 to 125, Glu143, Asp170, and Asp188 each bind S-adenosyl-L-methionine; that span reads ASAPGSK. Catalysis depends on Cys241, which acts as the Nucleophile.

Belongs to the class I-like SAM-binding methyltransferase superfamily. RsmB/NOP family.

Its subcellular location is the cytoplasm. The catalysed reaction is cytidine(1407) in 16S rRNA + S-adenosyl-L-methionine = 5-methylcytidine(1407) in 16S rRNA + S-adenosyl-L-homocysteine + H(+). In terms of biological role, specifically methylates the cytosine at position 1407 (m5C1407) of 16S rRNA. The chain is Ribosomal RNA small subunit methyltransferase F from Shewanella amazonensis (strain ATCC BAA-1098 / SB2B).